A 257-amino-acid chain; its full sequence is Imidazole glycerol phosphate synthase subunit HisF (257 aa).

Residues D12 and D131 contribute to the active site.

It belongs to the HisA/HisF family. As to quaternary structure, heterodimer of HisH and HisF.

The protein localises to the cytoplasm. The enzyme catalyses 5-[(5-phospho-1-deoxy-D-ribulos-1-ylimino)methylamino]-1-(5-phospho-beta-D-ribosyl)imidazole-4-carboxamide + L-glutamine = D-erythro-1-(imidazol-4-yl)glycerol 3-phosphate + 5-amino-1-(5-phospho-beta-D-ribosyl)imidazole-4-carboxamide + L-glutamate + H(+). Its pathway is amino-acid biosynthesis; L-histidine biosynthesis; L-histidine from 5-phospho-alpha-D-ribose 1-diphosphate: step 5/9. Functionally, IGPS catalyzes the conversion of PRFAR and glutamine to IGP, AICAR and glutamate. The HisF subunit catalyzes the cyclization activity that produces IGP and AICAR from PRFAR using the ammonia provided by the HisH subunit. This is Imidazole glycerol phosphate synthase subunit HisF from Burkholderia lata (strain ATCC 17760 / DSM 23089 / LMG 22485 / NCIMB 9086 / R18194 / 383).